Here is a 720-residue protein sequence, read N- to C-terminus: Nucleolar protein 11 (720 aa).

The segment at 365 to 392 is disordered; it reads KDPETKPSNAGAQKKTRERKTNANAGNG.

The protein resides in the nucleus. The protein localises to the nucleolus. Ribosome biogenesis factor. May be required for both optimal rDNA transcription and pre-rRNA processing. This chain is Nucleolar protein 11 (nol11), found in Xenopus laevis (African clawed frog).